The sequence spans 232 residues: 2-C-methyl-D-erythritol 4-phosphate cytidylyltransferase (232 aa).

This sequence belongs to the IspD/TarI cytidylyltransferase family. IspD subfamily.

The enzyme catalyses 2-C-methyl-D-erythritol 4-phosphate + CTP + H(+) = 4-CDP-2-C-methyl-D-erythritol + diphosphate. The protein operates within isoprenoid biosynthesis; isopentenyl diphosphate biosynthesis via DXP pathway; isopentenyl diphosphate from 1-deoxy-D-xylulose 5-phosphate: step 2/6. Catalyzes the formation of 4-diphosphocytidyl-2-C-methyl-D-erythritol from CTP and 2-C-methyl-D-erythritol 4-phosphate (MEP). The protein is 2-C-methyl-D-erythritol 4-phosphate cytidylyltransferase of Synechococcus sp. (strain ATCC 27144 / PCC 6301 / SAUG 1402/1) (Anacystis nidulans).